Reading from the N-terminus, the 57-residue chain is UPF0391 membrane protein BRADO2787 (57 aa).

Transmembrane regions (helical) follow at residues 6–26 and 35–55; these read WALL…TGVS and ILFY…LTIF.

This sequence belongs to the UPF0391 family.

It is found in the cell membrane. In Bradyrhizobium sp. (strain ORS 278), this protein is UPF0391 membrane protein BRADO2787.